The sequence spans 238 residues: CD63 antigen (238 aa).

Topologically, residues 1–11 (MAVEGGMKCVK) are cytoplasmic. Residues 12–32 (FLLYVLLLAFCACAVGLIAIG) form a helical membrane-spanning segment. Residues 33–51 (VAVQVVLKQAITHETTAGS) are Extracellular-facing. The chain crosses the membrane as a helical span at residues 52–72 (LLPVVIIAVGAFLFLVAFVGC). Topologically, residues 73 to 81 (CGACKENYC) are cytoplasmic. A helical membrane pass occupies residues 82 to 102 (LMITFAIFLSLIMLVEVAVAI). The Extracellular segment spans residues 103 to 203 (AGYVFRDQVK…TIAIWLRKNI (101 aa)). Asparagine 116, asparagine 130, asparagine 150, and asparagine 172 each carry an N-linked (GlcNAc...) asparagine glycan. A helical transmembrane segment spans residues 204 to 224 (LLVAAAALGIAFVEVLGIIFS). At 225–238 (CCLVKSIRSGYEVM) the chain is on the cytoplasmic side. The Lysosomal targeting motif motif lies at 234 to 238 (GYEVM).

It belongs to the tetraspanin (TM4SF) family. As to quaternary structure, interacts with TIMP1 and ITGB1 and recruits TIMP1 to ITGB1. Interacts with CD9. Identified in a complex with CD9 and ITGB3. Interacts with PMEL. Interacts with KDR/VEGFR2; identified in a complex with ITGB1 and KDR/VEGFR2 and is required to recruit KDR to ITGB1 complexes. Interacts with SYT7. Post-translationally, palmitoylated at a low, basal level in unstimulated platelets. The level of palmitoylation increases when platelets are activated by thrombin (in vitro). In terms of tissue distribution, ubiquitous. Strongly expressed in kidney. Detected in spleen, bone marrow, peripheral blood mononuclear cells and macrophages.

It localises to the cell membrane. The protein resides in the lysosome membrane. It is found in the late endosome membrane. The protein localises to the endosome. Its subcellular location is the multivesicular body. It localises to the melanosome. The protein resides in the secreted. It is found in the extracellular exosome. The protein localises to the cell surface. In terms of biological role, functions as a cell surface receptor for TIMP1 and plays a role in the activation of cellular signaling cascades. Plays a role in the activation of ITGB1 and integrin signaling, leading to the activation of AKT, FAK/PTK2 and MAP kinases. Promotes cell survival, reorganization of the actin cytoskeleton, cell adhesion, spreading and migration, via its role in the activation of AKT and FAK/PTK2. Plays a role in VEGFA signaling via its role in regulating the internalization of KDR/VEGFR2. Plays a role in intracellular vesicular transport processes, and is required for normal trafficking of the PMEL luminal domain that is essential for the development and maturation of melanocytes. Plays a role in the adhesion of leukocytes onto endothelial cells via its role in the regulation of SELP trafficking. May play a role in mast cell degranulation in response to Ms4a2/FceRI stimulation, but not in mast cell degranulation in response to other stimuli. This is CD63 antigen (Cd63) from Mus musculus (Mouse).